Here is a 360-residue protein sequence, read N- to C-terminus: MKASLLSKLDILQDRFEELTALLGDAEVISDQAKFRAYSKEYAEVEPIVATYKQVLKVQADLEGAQALLKDNDPDLREMAAEEVREAKEQLAELESSLQRMLLPKDPNDGRNVFLEIRAGTGGDEAAIFSGDLFRMYSRYAERRGWRLEILSENEGEHGGYKEVIARVEGESVYGKLKFESGAHRVQRVPATESQGRIHTSACTVAVLPEPDEQEAIEINPADLRIDTYRSSGAGGQHVNKTDSAIRITHIPSGIVVECQEERSQHKNRARAMSWLSAKLNDQQTSAAANAIASERKLLVGSGDRSERIRTYNFPQGRVTDHRINLTLYSLDEILAGGVEAVIEPLLAEYQADQLAALGE.

Q237 is subject to N5-methylglutamine.

It belongs to the prokaryotic/mitochondrial release factor family. Methylated by PrmC. Methylation increases the termination efficiency of RF1.

The protein localises to the cytoplasm. In terms of biological role, peptide chain release factor 1 directs the termination of translation in response to the peptide chain termination codons UAG and UAA. The chain is Peptide chain release factor 1 from Pseudomonas fluorescens (strain ATCC BAA-477 / NRRL B-23932 / Pf-5).